A 299-amino-acid chain; its full sequence is Probable lipid kinase YegS-like (299 aa).

The DAGKc domain maps to 1 to 129 (MSERKALLIL…IDLGEVGGQM (129 aa)). Residues threonine 39, 65-71 (GDGTLRD), and threonine 92 contribute to the ATP site. Residues leucine 210, aspartate 213, and leucine 215 each contribute to the Mg(2+) site. The Proton acceptor role is filled by glutamate 268.

This sequence belongs to the diacylglycerol/lipid kinase family. YegS lipid kinase subfamily. Mg(2+) serves as cofactor. Requires Ca(2+) as cofactor.

Its subcellular location is the cytoplasm. Its function is as follows. Probably phosphorylates lipids; the in vivo substrate is unknown. The chain is Probable lipid kinase YegS-like from Pseudomonas fluorescens (strain ATCC BAA-477 / NRRL B-23932 / Pf-5).